The chain runs to 431 residues: 23S rRNA (uracil(1939)-C(5))-methyltransferase RlmD (431 aa).

Positions 10–68 (RVTTRQIITVKVNDLDSFGQGVARHNGKALFIPGLLPEESAEVIITEDKKQFARARVSR) constitute a TRAM domain. Positions 81, 87, 90, and 161 each coordinate [4Fe-4S] cluster. Residues Gln-264, Phe-293, Asn-298, Glu-314, Asn-341, and Asp-362 each coordinate S-adenosyl-L-methionine. The active-site Nucleophile is the Cys-388.

The protein belongs to the class I-like SAM-binding methyltransferase superfamily. RNA M5U methyltransferase family. RlmD subfamily.

It catalyses the reaction uridine(1939) in 23S rRNA + S-adenosyl-L-methionine = 5-methyluridine(1939) in 23S rRNA + S-adenosyl-L-homocysteine + H(+). Catalyzes the formation of 5-methyl-uridine at position 1939 (m5U1939) in 23S rRNA. This Salmonella paratyphi A (strain ATCC 9150 / SARB42) protein is 23S rRNA (uracil(1939)-C(5))-methyltransferase RlmD.